Consider the following 232-residue polypeptide: Phosphoglycolate phosphatase (232 aa).

The active-site Nucleophile is the Asp13. Residues Asp13, Asp15, and Asp175 each contribute to the Mg(2+) site.

It belongs to the HAD-like hydrolase superfamily. CbbY/CbbZ/Gph/YieH family. As to quaternary structure, monomer. The cofactor is Mg(2+). Chloride is required as a cofactor.

The catalysed reaction is 2-phosphoglycolate + H2O = glycolate + phosphate. The protein operates within organic acid metabolism; glycolate biosynthesis; glycolate from 2-phosphoglycolate: step 1/1. In terms of biological role, specifically catalyzes the dephosphorylation of 2-phosphoglycolate. Is involved in the dissimilation of the intracellular 2-phosphoglycolate formed during the DNA repair of 3'-phosphoglycolate ends, a major class of DNA lesions induced by oxidative stress. In Yersinia pseudotuberculosis serotype I (strain IP32953), this protein is Phosphoglycolate phosphatase.